A 369-amino-acid polypeptide reads, in one-letter code: Histidinol-phosphate aminotransferase 2 (369 aa).

Lys229 carries the post-translational modification N6-(pyridoxal phosphate)lysine.

Belongs to the class-II pyridoxal-phosphate-dependent aminotransferase family. Histidinol-phosphate aminotransferase subfamily. As to quaternary structure, homodimer. Pyridoxal 5'-phosphate is required as a cofactor.

The enzyme catalyses L-histidinol phosphate + 2-oxoglutarate = 3-(imidazol-4-yl)-2-oxopropyl phosphate + L-glutamate. Its pathway is amino-acid biosynthesis; L-histidine biosynthesis; L-histidine from 5-phospho-alpha-D-ribose 1-diphosphate: step 7/9. This Pseudomonas aeruginosa (strain ATCC 15692 / DSM 22644 / CIP 104116 / JCM 14847 / LMG 12228 / 1C / PRS 101 / PAO1) protein is Histidinol-phosphate aminotransferase 2 (hisC2).